The primary structure comprises 143 residues: Nucleoside diphosphate kinase (143 aa).

ATP-binding residues include Lys-11, Phe-59, Arg-87, Thr-93, Arg-104, and Asn-114. His-117 acts as the Pros-phosphohistidine intermediate in catalysis.

It belongs to the NDK family. Homotetramer. It depends on Mg(2+) as a cofactor.

The protein localises to the cytoplasm. It catalyses the reaction a 2'-deoxyribonucleoside 5'-diphosphate + ATP = a 2'-deoxyribonucleoside 5'-triphosphate + ADP. The catalysed reaction is a ribonucleoside 5'-diphosphate + ATP = a ribonucleoside 5'-triphosphate + ADP. Major role in the synthesis of nucleoside triphosphates other than ATP. The ATP gamma phosphate is transferred to the NDP beta phosphate via a ping-pong mechanism, using a phosphorylated active-site intermediate. In Nitrosococcus oceani (strain ATCC 19707 / BCRC 17464 / JCM 30415 / NCIMB 11848 / C-107), this protein is Nucleoside diphosphate kinase.